We begin with the raw amino-acid sequence, 100 residues long: MELLGEYVGQEGKPQKLRVSCEAPGDGDPFQGLLSGVAQMKDMVTELFDPLVQGEVQHRVAAAPDEDLDGDDEDDAEDENNIDNRTNFDGPSAKRPKTPS.

N-acetylmethionine is present on methionine 1. A disordered region spans residues 61 to 100 (AAAPDEDLDGDDEDDAEDENNIDNRTNFDGPSAKRPKTPS). A compositionally biased stretch (acidic residues) spans 64–81 (PDEDLDGDDEDDAEDENN).

Component of the EKC/KEOPS complex composed of at least GON7, TP53RK, TPRKB, OSGEP and LAGE3; the whole complex dimerizes.

The protein resides in the nucleus. Its function is as follows. Component of the EKC/KEOPS complex that is required for the formation of a threonylcarbamoyl group on adenosine at position 37 (t(6)A37) in tRNAs that read codons beginning with adenine. The complex is probably involved in the transfer of the threonylcarbamoyl moiety of threonylcarbamoyl-AMP (TC-AMP) to the N6 group of A37. GON7 plays a supporting role to the catalytic subunit OSGEP in the complex. The sequence is that of EKC/KEOPS complex subunit GON7 from Homo sapiens (Human).